Here is a 354-residue protein sequence, read N- to C-terminus: DNA polymerase IV (354 aa).

The UmuC domain occupies 6 to 187; sequence IIHVDCDCFY…LPVARLHGVG (182 aa). 2 residues coordinate Mg(2+): Asp10 and Asp105. Residue Glu106 is part of the active site.

The protein belongs to the DNA polymerase type-Y family. As to quaternary structure, monomer. Mg(2+) is required as a cofactor.

It localises to the cytoplasm. The catalysed reaction is DNA(n) + a 2'-deoxyribonucleoside 5'-triphosphate = DNA(n+1) + diphosphate. Functionally, poorly processive, error-prone DNA polymerase involved in untargeted mutagenesis. Copies undamaged DNA at stalled replication forks, which arise in vivo from mismatched or misaligned primer ends. These misaligned primers can be extended by PolIV. Exhibits no 3'-5' exonuclease (proofreading) activity. May be involved in translesional synthesis, in conjunction with the beta clamp from PolIII. This is DNA polymerase IV from Pseudomonas putida (strain GB-1).